A 79-amino-acid chain; its full sequence is Small ribosomal subunit protein bS16c (79 aa).

It belongs to the bacterial ribosomal protein bS16 family.

The protein localises to the plastid. Its subcellular location is the chloroplast. This Staurastrum punctulatum (Green alga) protein is Small ribosomal subunit protein bS16c.